The sequence spans 382 residues: Dual-specificity RNA methyltransferase RlmN (382 aa).

The active-site Proton acceptor is glutamate 96. The region spanning 102–342 (QGKRGTLCVS…VRTTRGEDID (241 aa)) is the Radical SAM core domain. Cysteines 109 and 345 form a disulfide. Residues cysteine 116, cysteine 120, and cysteine 123 each contribute to the [4Fe-4S] cluster site. S-adenosyl-L-methionine is bound by residues 170–171 (GE), serine 202, 224–226 (SLH), and asparagine 302. Residue cysteine 345 is the S-methylcysteine intermediate of the active site.

It belongs to the radical SAM superfamily. RlmN family. [4Fe-4S] cluster serves as cofactor.

It localises to the cytoplasm. The enzyme catalyses adenosine(2503) in 23S rRNA + 2 reduced [2Fe-2S]-[ferredoxin] + 2 S-adenosyl-L-methionine = 2-methyladenosine(2503) in 23S rRNA + 5'-deoxyadenosine + L-methionine + 2 oxidized [2Fe-2S]-[ferredoxin] + S-adenosyl-L-homocysteine. The catalysed reaction is adenosine(37) in tRNA + 2 reduced [2Fe-2S]-[ferredoxin] + 2 S-adenosyl-L-methionine = 2-methyladenosine(37) in tRNA + 5'-deoxyadenosine + L-methionine + 2 oxidized [2Fe-2S]-[ferredoxin] + S-adenosyl-L-homocysteine. In terms of biological role, specifically methylates position 2 of adenine 2503 in 23S rRNA and position 2 of adenine 37 in tRNAs. m2A2503 modification seems to play a crucial role in the proofreading step occurring at the peptidyl transferase center and thus would serve to optimize ribosomal fidelity. In Pseudomonas syringae pv. syringae (strain B728a), this protein is Dual-specificity RNA methyltransferase RlmN.